The following is a 195-amino-acid chain: Imidazoleglycerol-phosphate dehydratase (195 aa).

Belongs to the imidazoleglycerol-phosphate dehydratase family.

It localises to the cytoplasm. It catalyses the reaction D-erythro-1-(imidazol-4-yl)glycerol 3-phosphate = 3-(imidazol-4-yl)-2-oxopropyl phosphate + H2O. It participates in amino-acid biosynthesis; L-histidine biosynthesis; L-histidine from 5-phospho-alpha-D-ribose 1-diphosphate: step 6/9. The chain is Imidazoleglycerol-phosphate dehydratase from Heliobacterium modesticaldum (strain ATCC 51547 / Ice1).